We begin with the raw amino-acid sequence, 504 residues long: D-alanine--D-alanyl carrier protein ligase (504 aa).

Position 152 to 153 (152 to 153) interacts with ATP; it reads TS. Aspartate 197 contacts D-alanine. Residue 292–297 participates in ATP binding; it reads NTYGPT. Residue valine 301 participates in D-alanine binding. Residues aspartate 383, 394–397, and lysine 492 each bind ATP; that span reads YNGR. Residue lysine 492 coordinates D-alanine.

The protein belongs to the ATP-dependent AMP-binding enzyme family. DltA subfamily.

Its subcellular location is the cytoplasm. It carries out the reaction holo-[D-alanyl-carrier protein] + D-alanine + ATP = D-alanyl-[D-alanyl-carrier protein] + AMP + diphosphate. It functions in the pathway cell wall biogenesis; lipoteichoic acid biosynthesis. Functionally, catalyzes the first step in the D-alanylation of lipoteichoic acid (LTA), the activation of D-alanine and its transfer onto the D-alanyl carrier protein (Dcp) DltC. In an ATP-dependent two-step reaction, forms a high energy D-alanyl-AMP intermediate, followed by transfer of the D-alanyl residue as a thiol ester to the phosphopantheinyl prosthetic group of the Dcp. D-alanylation of LTA plays an important role in modulating the properties of the cell wall in Gram-positive bacteria, influencing the net charge of the cell wall. In Bacillus cereus (strain ATCC 10987 / NRS 248), this protein is D-alanine--D-alanyl carrier protein ligase.